Consider the following 206-residue polypeptide: Large ribosomal subunit protein uL4 (206 aa).

The interval 63-97 is disordered; it reads MYKQKGTGRARHHSARAPQFRGGGKAHGPVVRSHE. Residues 64-77 are compositionally biased toward basic residues; that stretch reads YKQKGTGRARHHSA.

It belongs to the universal ribosomal protein uL4 family. Part of the 50S ribosomal subunit.

Functionally, one of the primary rRNA binding proteins, this protein initially binds near the 5'-end of the 23S rRNA. It is important during the early stages of 50S assembly. It makes multiple contacts with different domains of the 23S rRNA in the assembled 50S subunit and ribosome. Forms part of the polypeptide exit tunnel. This Rhizobium leguminosarum bv. trifolii (strain WSM2304) protein is Large ribosomal subunit protein uL4.